A 362-amino-acid chain; its full sequence is DNA replication and repair protein RecF (362 aa).

30–37 (GLNAQGKS) is an ATP binding site.

Belongs to the RecF family.

The protein resides in the cytoplasm. Functionally, the RecF protein is involved in DNA metabolism; it is required for DNA replication and normal SOS inducibility. RecF binds preferentially to single-stranded, linear DNA. It also seems to bind ATP. The chain is DNA replication and repair protein RecF from Thermoanaerobacter pseudethanolicus (strain ATCC 33223 / 39E) (Clostridium thermohydrosulfuricum).